A 133-amino-acid chain; its full sequence is Large ribosomal subunit protein uL15 (133 aa).

The interval 1–62 (MALHNLQPAP…GQQPLQRRLP (62 aa)) is disordered. Over residues 32 to 45 (TRGQKGQKSRTGYS) the composition is skewed to polar residues.

Belongs to the universal ribosomal protein uL15 family. Part of the 50S ribosomal subunit.

In terms of biological role, binds to the 23S rRNA. The chain is Large ribosomal subunit protein uL15 from Nitratiruptor sp. (strain SB155-2).